We begin with the raw amino-acid sequence, 340 residues long: Ferrochelatase (340 aa).

Positions 202 and 283 each coordinate Fe cation.

The protein belongs to the ferrochelatase family.

The protein resides in the cytoplasm. The enzyme catalyses heme b + 2 H(+) = protoporphyrin IX + Fe(2+). Its pathway is porphyrin-containing compound metabolism; protoheme biosynthesis; protoheme from protoporphyrin-IX: step 1/1. In terms of biological role, catalyzes the ferrous insertion into protoporphyrin IX. The protein is Ferrochelatase of Acinetobacter baylyi (strain ATCC 33305 / BD413 / ADP1).